The chain runs to 269 residues: 2-dehydro-3-deoxyphosphooctonate aldolase (269 aa).

The protein belongs to the KdsA family.

The protein resides in the cytoplasm. The catalysed reaction is D-arabinose 5-phosphate + phosphoenolpyruvate + H2O = 3-deoxy-alpha-D-manno-2-octulosonate-8-phosphate + phosphate. It functions in the pathway carbohydrate biosynthesis; 3-deoxy-D-manno-octulosonate biosynthesis; 3-deoxy-D-manno-octulosonate from D-ribulose 5-phosphate: step 2/3. Its pathway is bacterial outer membrane biogenesis; lipopolysaccharide biosynthesis. The chain is 2-dehydro-3-deoxyphosphooctonate aldolase from Chlamydia felis (strain Fe/C-56) (Chlamydophila felis).